The sequence spans 148 residues: Ribonuclease H (148 aa).

An RNase H type-1 domain is found at 3-144; sequence DKEQVVIYTD…ADQLANRGVA (142 aa). Asp-12, Glu-50, Asp-72, and Asp-136 together coordinate Mg(2+). The segment at 125–148 is disordered; sequence GHTGDPGNERADQLANRGVAELPR.

Belongs to the RNase H family. Monomer. Mg(2+) serves as cofactor.

It is found in the cytoplasm. It carries out the reaction Endonucleolytic cleavage to 5'-phosphomonoester.. Functionally, endonuclease that specifically degrades the RNA of RNA-DNA hybrids. The polypeptide is Ribonuclease H (Pseudomonas aeruginosa (strain LESB58)).